We begin with the raw amino-acid sequence, 341 residues long: Phosphate acyltransferase (341 aa).

Belongs to the PlsX family. Homodimer. Probably interacts with PlsY.

It localises to the cytoplasm. It carries out the reaction a fatty acyl-[ACP] + phosphate = an acyl phosphate + holo-[ACP]. It functions in the pathway lipid metabolism; phospholipid metabolism. Catalyzes the reversible formation of acyl-phosphate (acyl-PO(4)) from acyl-[acyl-carrier-protein] (acyl-ACP). This enzyme utilizes acyl-ACP as fatty acyl donor, but not acyl-CoA. This Elusimicrobium minutum (strain Pei191) protein is Phosphate acyltransferase.